The chain runs to 589 residues: Aspartate--tRNA(Asp/Asn) ligase (589 aa).

Glu176 lines the L-aspartate pocket. The aspartate stretch occupies residues 200 to 203 (QLFK). Arg222 is an L-aspartate binding site. Residues 222-224 (RDE) and Gln231 each bind ATP. His450 lines the L-aspartate pocket. Glu484 contributes to the ATP binding site. Arg491 serves as a coordination point for L-aspartate. 536–539 (GLDR) is an ATP binding site.

Belongs to the class-II aminoacyl-tRNA synthetase family. Type 1 subfamily. Homodimer.

The protein resides in the cytoplasm. The enzyme catalyses tRNA(Asx) + L-aspartate + ATP = L-aspartyl-tRNA(Asx) + AMP + diphosphate. Functionally, aspartyl-tRNA synthetase with relaxed tRNA specificity since it is able to aspartylate not only its cognate tRNA(Asp) but also tRNA(Asn). Reaction proceeds in two steps: L-aspartate is first activated by ATP to form Asp-AMP and then transferred to the acceptor end of tRNA(Asp/Asn). The protein is Aspartate--tRNA(Asp/Asn) ligase of Bacillus cytotoxicus (strain DSM 22905 / CIP 110041 / 391-98 / NVH 391-98).